A 317-amino-acid polypeptide reads, in one-letter code: Large ribosomal subunit protein uL10z (317 aa).

It belongs to the universal ribosomal protein uL10 family. As to quaternary structure, P0 forms a pentameric complex by interaction with dimers of P1 and P2. Post-translationally, phosphorylated.

Ribosomal protein P0 is the functional equivalent of E.coli protein L10. The chain is Large ribosomal subunit protein uL10z (RPP0A) from Arabidopsis thaliana (Mouse-ear cress).